A 759-amino-acid polypeptide reads, in one-letter code: Cullin-4A (759 aa).

Residue K8 forms a Glycyl lysine isopeptide (Lys-Gly) (interchain with G-Cter in SUMO2) linkage. A Phosphoserine modification is found at S10. K33 participates in a covalent cross-link: Glycyl lysine isopeptide (Lys-Gly) (interchain with G-Cter in ubiquitin). A Cullin neddylation domain is found at 691–751 (DRQYQIDAAI…RDYMERDKDN (61 aa)). K705 participates in a covalent cross-link: Glycyl lysine isopeptide (Lys-Gly) (interchain with G-Cter in NEDD8).

It belongs to the cullin family. As to quaternary structure, can self-associate. Component of multiple DCX (DDB1-CUL4-X-box) E3 ubiquitin-protein ligase complexes that seem to consist of DDB1, CUL4A or CUL4B, RBX1 and a variable substrate recognition component which seems to belong to a protein family described as DCAF (Ddb1- and Cul4-associated factor) or CDW (CUL4-DDB1-associated WD40-repeat) proteins. Component of the CSA complex (DCX(ERCC8) complex) containing ERCC8, RBX1, DDB1 and CUL4A; the CSA complex interacts with RNA polymerase II; upon UV irradiation it interacts with the COP9 signalosome and preferentially with the hyperphosphorylated form of RNA polymerase II. Component of the DCX(DET1-COP1) complex with the substrate recognition component DET1 and COP1. Component of the DCX(DDB2) complex with the substrate recognition component DDB2. Component of the DCX(DTL) complex with the putative substrate recognition component DTL. Component of DCX complexes part of the DesCEND (destruction via C-end degrons) pathway, which contain either TRPC4AP or DCAF12 as substrate-recognition component. Component of the DCX(AMBRA1) complex with the substrate recognition component AMBRA1. Interacts with DDB1, RBX1, RNF7, CDT1, TIP120A/CAND1, SKP2, CDKN1B, MDM2, TP53 and HOXA9. Interacts with DDB2; the interactions with DDB2 and CAND1 are mutually exclusive. Interacts with DCAF1, DTL, DDA1, DCAF6, DCAF4, DCAF16, DCAF17, DET1, WDTC1, DCAF5, DCAF11, WDR24A, COP1, PAFAH1B1, ERCC8, GRWD1, FBXW5, RBBP7, GNB2, WSB1, WSB2, NUP43, PWP1, FBXW8, ATG16L1, KATNB1, RBBP4, RBBP5, LRWD1 and DCAF8. May interact with WDR26, WDR51B, SNRNP40, WDR61, WDR76, WDR5. Interacts (when neddylated) with ARIH1; leading to activate the E3 ligase activity of ARIH1. The DDB1-CUL4A complex interacts with CRY1. Interacts (unneddylated form) with DCUN1D1, DCUN1D2, DCUN1D3, DCUN1D4 and DCUN1D5; these interactions promote the cullin neddylation. In terms of assembly, (Microbial infection) Interacts with Epstein-Barr virus BPLF1. Post-translationally, neddylated; required for activity of cullin-RING-based E3 ubiquitin-protein ligase complexes. Deneddylated via its interaction with the COP9 signalosome (CSN) complex. In terms of processing, (Microbial infection) Deneddylated by Epstein-Barr virus BPLF1 leading to a S-phase-like environment that is required for efficient replication of the viral genome.

It functions in the pathway protein modification; protein ubiquitination. Its function is as follows. Core component of multiple cullin-RING-based E3 ubiquitin-protein ligase complexes which mediate the ubiquitination of target proteins. As a scaffold protein may contribute to catalysis through positioning of the substrate and the ubiquitin-conjugating enzyme. The E3 ubiquitin-protein ligase activity of the complex is dependent on the neddylation of the cullin subunit and is inhibited by the association of the deneddylated cullin subunit with TIP120A/CAND1. The functional specificity of the E3 ubiquitin-protein ligase complex depends on the variable substrate recognition component. DCX(DET1-COP1) directs ubiquitination of JUN. DCX(DDB2) directs ubiquitination of XPC. DCX(DDB2) ubiquitinates histones H3-H4 and is required for efficient histone deposition during replication-coupled (H3.1) and replication-independent (H3.3) nucleosome assembly, probably by facilitating the transfer of H3 from ASF1A/ASF1B to other chaperones involved in histone deposition. DCX(DTL) plays a role in PCNA-dependent polyubiquitination of CDT1 and MDM2-dependent ubiquitination of p53/TP53 in response to radiation-induced DNA damage and during DNA replication. DCX(DTL) directs autoubiquitination of DTL. In association with DDB1 and SKP2 probably is involved in ubiquitination of CDKN1B/p27kip. Is involved in ubiquitination of HOXA9. The DDB1-CUL4A-DTL E3 ligase complex regulates the circadian clock function by mediating the ubiquitination and degradation of CRY1. The DCX(ERCC8) complex (also named CSA complex) plays a role in transcription-coupled repair (TCR). A number of DCX complexes (containing either TRPC4AP or DCAF12 as substrate-recognition component) are part of the DesCEND (destruction via C-end degrons) pathway, which recognizes a C-degron located at the extreme C terminus of target proteins, leading to their ubiquitination and degradation. The DCX(AMBRA1) complex is a master regulator of the transition from G1 to S cell phase by mediating ubiquitination of phosphorylated cyclin-D (CCND1, CCND2 and CCND3). The DCX(AMBRA1) complex also acts as a regulator of Cul5-RING (CRL5) E3 ubiquitin-protein ligase complexes by mediating ubiquitination and degradation of Elongin-C (ELOC) component of CRL5 complexes. With CUL4B, contributes to ribosome biogenesis. The polypeptide is Cullin-4A (Homo sapiens (Human)).